Here is a 445-residue protein sequence, read N- to C-terminus: Tubby-like F-box protein 10 (445 aa).

The region spanning 57–112 is the F-box domain; sequence SRWANLPPELLFDVIKRLEESESNWPARKHVVACASVCRSWRAMCQEIVLGPEICG. Over residues 382 to 398 the composition is skewed to low complexity; the sequence is PQPQGTGAAAAPTSAPA. A disordered region spans residues 382 to 401; the sequence is PQPQGTGAAAAPTSAPAHPE.

It belongs to the TUB family. Part of a SCF (ASK-cullin-F-box) protein ligase complex. Interacts with SKP1A/ASK1. Ubiquitous.

It localises to the nucleus. It participates in protein modification; protein ubiquitination. Component of SCF(ASK-cullin-F-box) E3 ubiquitin ligase complexes, which may mediate the ubiquitination and subsequent proteasomal degradation of target proteins. The sequence is that of Tubby-like F-box protein 10 from Arabidopsis thaliana (Mouse-ear cress).